A 245-amino-acid chain; its full sequence is Tetraspanin-6 (245 aa).

The Cytoplasmic portion of the chain corresponds to 1 to 19 (MASPSRRLQTKPVITCFKS). A helical membrane pass occupies residues 20-40 (VLLIYTFIFWITGVILLAVGI). Over 41–59 (WGKVSLENYFSLLNEKATN) the chain is Extracellular. Residues 60 to 80 (VPFVLIATGTVIILLGTFGCF) form a helical membrane-spanning segment. Over 81-93 (ATCRASAWMLKLY) the chain is Cytoplasmic. Residues 94-114 (AMFLTLIFLVELVAAIVGFVF) form a helical membrane-spanning segment. At 115–208 (RHEIKNSFKN…IKVMTIIESE (94 aa)) the chain is on the extracellular side. N-linked (GlcNAc...) asparagine glycosylation occurs at asparagine 134. A helical membrane pass occupies residues 209–229 (MGVVAGISFGVACFQLIGIFL). Over 230–245 (AYCLSRAITNNQYEIV) the chain is Cytoplasmic.

Belongs to the tetraspanin (TM4SF) family.

It localises to the membrane. The protein is Tetraspanin-6 (TSPAN6) of Pongo abelii (Sumatran orangutan).